Reading from the N-terminus, the 103-residue chain is Flagellar hook-basal body complex protein FliE (103 aa).

This sequence belongs to the FliE family.

The protein localises to the bacterial flagellum basal body. The polypeptide is Flagellar hook-basal body complex protein FliE (Yersinia enterocolitica serotype O:8 / biotype 1B (strain NCTC 13174 / 8081)).